Here is a 159-residue protein sequence, read N- to C-terminus: 2-C-methyl-D-erythritol 2,4-cyclodiphosphate synthase (159 aa).

Residues Asp-8 and His-10 each contribute to the a divalent metal cation site. 4-CDP-2-C-methyl-D-erythritol 2-phosphate contacts are provided by residues 8 to 10 and 34 to 35; these read DVH and HS. His-42 contributes to the a divalent metal cation binding site. 4-CDP-2-C-methyl-D-erythritol 2-phosphate contacts are provided by residues 56 to 58, 61 to 65, 100 to 106, 132 to 135, Phe-139, and Arg-142; these read DIG, FPDTD, AQAPKML, and TTTE.

Belongs to the IspF family. In terms of assembly, homotrimer. It depends on a divalent metal cation as a cofactor.

The enzyme catalyses 4-CDP-2-C-methyl-D-erythritol 2-phosphate = 2-C-methyl-D-erythritol 2,4-cyclic diphosphate + CMP. Its pathway is isoprenoid biosynthesis; isopentenyl diphosphate biosynthesis via DXP pathway; isopentenyl diphosphate from 1-deoxy-D-xylulose 5-phosphate: step 4/6. Functionally, involved in the biosynthesis of isopentenyl diphosphate (IPP) and dimethylallyl diphosphate (DMAPP), two major building blocks of isoprenoid compounds. Catalyzes the conversion of 4-diphosphocytidyl-2-C-methyl-D-erythritol 2-phosphate (CDP-ME2P) to 2-C-methyl-D-erythritol 2,4-cyclodiphosphate (ME-CPP) with a corresponding release of cytidine 5-monophosphate (CMP). The sequence is that of 2-C-methyl-D-erythritol 2,4-cyclodiphosphate synthase from Escherichia coli O81 (strain ED1a).